Consider the following 535-residue polypeptide: 5,6-dihydroxyindole-2-carboxylic acid oxidase (535 aa).

The signal sequence occupies residues 1–23; it reads MQLPMLLLVSLPLLLNMFKPAEA. Residues 24–478 are Lumenal, melanosome-facing; the sequence is QFPRQCATIE…GPLRVTEMIT (455 aa). Disulfide bonds link C29–C40, C41–C64, C55–C98, C100–C109, and C112–C121. Residues N95 and N103 are each glycosylated (N-linked (GlcNAc...) asparagine). An N-linked (GlcNAc...) asparagine glycan is attached at N180. Zn(2+)-binding residues include H191, H214, and H223. 2 disulfides stabilise this stretch: C257/C260 and C289/C302. N-linked (GlcNAc...) asparagine glycans are attached at residues N303 and N349. Residues H376 and H380 each contribute to the Zn(2+) site. Residue N384 is glycosylated (N-linked (GlcNAc...) asparagine). H403 provides a ligand contact to Zn(2+). Residues 479 to 499 traverse the membrane as a helical segment; sequence IAIVTALVLVAIIFAAAACIV. The Cytoplasmic portion of the chain corresponds to 500 to 535; the sequence is RAKKNRDELHQPLLTDQYQHYSDDYDGIATPSQSVV.

The protein belongs to the tyrosinase family. Tyrosinase, TYRP1 and TYRP2 may form a multienzyme complex. The cofactor is Cu(2+). Zn(2+) serves as cofactor.

It is found in the melanosome membrane. It carries out the reaction 2 5,6-dihydroxyindole-2-carboxylate + O2 = 2 indole-5,6-quinone-2-carboxylate + 2 H2O. Its pathway is pigment biosynthesis; melanin biosynthesis. Functionally, plays a role in melanin biosynthesis. Catalyzes the oxidation of 5,6-dihydroxyindole-2-carboxylic acid (DHICA) into indole-5,6-quinone-2-carboxylic acid. May regulate or influence the type of melanin synthesized. Also to a lower extent, capable of hydroxylating tyrosine and producing melanin. In Gallus gallus (Chicken), this protein is 5,6-dihydroxyindole-2-carboxylic acid oxidase (TYRP1).